A 491-amino-acid chain; its full sequence is F-box/LRR-repeat protein 7 (491 aa).

The disordered stretch occupies residues 1–79 (MGANNGKQYG…GRGSSTSSSS (79 aa)). Positions 10–26 (GSEGKGSSSISSDVSSS) are enriched in low complexity. Positions 27–55 (TDHTPTKAQKNVATSEDSDLSMRTLSTPS) are enriched in polar residues. In terms of domain architecture, F-box spans 111–157 (QASIDRLPDHSMVQIFSFLPTNQLCRCARVCRRWYNLAWDPRLWRTI). 11 LRR repeats span residues 170 to 195 (LKVL…TVSG), 196 to 221 (CRRL…EVSG), 222 to 247 (CYNI…DVSG), 253 to 281 (CISL…DMTD), 282 to 307 (CFVL…YLRR), 308 to 333 (CVRL…SVSD), 334 to 359 (CRFV…SIAH), 360 to 385 (CGRV…NARG), 386 to 411 (CEGI…DIGK), 412 to 437 (CPLV…SLKS), and 438 to 463 (CESI…NVQD).

This sequence belongs to the FBXL7 family. As to quaternary structure, part of the SCF (SKP1-CUL1-F-box) E3 ubiquitin-protein ligase complex SCF(FBXL7) composed of CUL1, SKP1, RBX1 and FBXL7. Interacts with AURKA; interaction takes place during mitosis but not in interphase. Interacts with BIRC5; this interaction allows BIRC5 to be polyubiquitinated by the SCF(FBXL7) E3 ubiquitin-protein ligase complex.

It localises to the cytoplasm. The protein resides in the cytoskeleton. The protein localises to the microtubule organizing center. It is found in the centrosome. The protein operates within protein modification; protein ubiquitination. In terms of biological role, substrate recognition component of a SCF (SKP1-CUL1-F-box protein) E3 ubiquitin-protein ligase complex. During mitosis, it mediates the ubiquitination and subsequent proteasomal degradation of AURKA, causing mitotic arrest. It also regulates mitochondrial function by mediating the ubiquitination and proteasomal degradation of the apoptosis inhibitor BIRC5. The protein is F-box/LRR-repeat protein 7 (FBXL7) of Homo sapiens (Human).